We begin with the raw amino-acid sequence, 316 residues long: KRR1 small subunit processome component (316 aa).

The 71-residue stretch at 122–192 folds into the KH domain; it reads ACDVIKIGNF…VRRVVEDCMK (71 aa). Residues 279-304 show a composition bias toward basic and acidic residues; the sequence is KKLNEQKEKQMEREIERQEERAKDFI. A disordered region spans residues 279-316; that stretch reads KKLNEQKEKQMEREIERQEERAKDFIAPEEEAYKPNQN.

It belongs to the KRR1 family. Component of the ribosomal small subunit (SSU) processome composed of at least 40 protein subunits and snoRNA U3. Interacts with snoRNA U3. Interacts with MPP10, KRI1 and with ribosomal proteins RPS1A, RPS4A, RPS4B, RPS8A, RPS8B, RPS11A, RPS11B, RPS13, RPS24, RPS25, RPL4A, RPL7B, RPL8, RPL23, RPL25 and RPL28.

The protein resides in the nucleus. It localises to the nucleolus. Functionally, required for 40S ribosome biogenesis. Involved in nucleolar processing of pre-18S ribosomal RNA and ribosome assembly. Essential for vegetative growth. The sequence is that of KRR1 small subunit processome component from Saccharomyces cerevisiae (strain RM11-1a) (Baker's yeast).